A 1168-amino-acid chain; its full sequence is ATP-dependent DNA helicase mph1 (1168 aa).

Polar residues-rich tracts occupy residues 24–38 and 59–68; these read NITS…QLAS and PTVSQGQATA. The disordered stretch occupies residues 24–132; the sequence is NITSHHPSNS…PFRADMPPEQ (109 aa). The span at 71 to 88 shows a compositional bias: low complexity; that stretch reads RAKTASKPTTSATTSRPS. Residues 89–104 are compositionally biased toward polar residues; sequence LAQSSQRKNLRQTTLW. The 169-residue stretch at 162-330 folds into the Helicase ATP-binding domain; it reads IVKNGLFNNT…DVIDNLGISH (169 aa). 175 to 182 lines the ATP pocket; that stretch reads LPTGLGKT. The DEAH box motif lies at 278-281; that stretch reads DEAH. The Helicase C-terminal domain maps to 506 to 665; sequence LVNHFMDAGE…GSRFTFRHDL (160 aa). Disordered stretches follow at residues 690-717 and 830-1168; these read SQNP…FNMP and APAN…DDQE. Basic residues predominate over residues 701 to 714; it reads SAARMRTKPAKKKF. Residues 895–907 are compositionally biased toward polar residues; the sequence is TAKTKSTGVSKQT. Positions 920-936 are enriched in acidic residues; sequence DCEEGGNEYDGNVDDDE. The segment covering 941 to 959 has biased composition (basic residues); it reads RNFRSKGRGRGSGRGKKSQ. Positions 985-996 are enriched in acidic residues; it reads GSDDGADLEDFI. Polar residues predominate over residues 1001–1030; it reads EVTSSLQHRPRGSTSPTTAPDAGSSSLSSK.

This sequence belongs to the DEAD box helicase family. DEAH subfamily. FANCM sub-subfamily. As to quaternary structure, interacts with the MHF histone-fold complex to form the FANCM-MHF complex.

Its subcellular location is the nucleus. The enzyme catalyses ATP + H2O = ADP + phosphate + H(+). Functionally, ATP-dependent DNA helicase involved in DNA damage repair by homologous recombination and in genome maintenance. Capable of unwinding D-loops. Plays a role in limiting crossover recombinants during mitotic DNA double-strand break (DSB) repair. Component of a FANCM-MHF complex which promotes gene conversion at blocked replication forks, probably by reversal of the stalled fork. This Neurospora crassa (strain ATCC 24698 / 74-OR23-1A / CBS 708.71 / DSM 1257 / FGSC 987) protein is ATP-dependent DNA helicase mph1.